The following is a 678-amino-acid chain: DNA mismatch repair protein MutL (678 aa).

It belongs to the DNA mismatch repair MutL/HexB family.

Functionally, this protein is involved in the repair of mismatches in DNA. It is required for dam-dependent methyl-directed DNA mismatch repair. May act as a 'molecular matchmaker', a protein that promotes the formation of a stable complex between two or more DNA-binding proteins in an ATP-dependent manner without itself being part of a final effector complex. The protein is DNA mismatch repair protein MutL of Lactiplantibacillus plantarum (strain ATCC BAA-793 / NCIMB 8826 / WCFS1) (Lactobacillus plantarum).